The following is a 146-amino-acid chain: Tyrosinase cofactor (146 aa).

The segment at residues Met1 to Ala30 is a signal peptide (tat-type signal). The interval Arg65–Gly85 is disordered. Residues Asp69 to Gly85 are compositionally biased toward gly residues.

This sequence belongs to the melC1 family. In terms of processing, predicted to be exported by the Tat system. The position of the signal peptide cleavage has not been experimentally proven.

Functionally, this protein may function to deliver copper to tyrosinase. The chain is Tyrosinase cofactor (melC1) from Streptomyces antibioticus.